The primary structure comprises 314 residues: GTP cyclohydrolase FolE2 (314 aa).

Residues 290 to 314 are disordered; it reads DASAWSAPQASAPDQQESFATGNER. Over residues 291 to 305 the composition is skewed to low complexity; sequence ASAWSAPQASAPDQQ.

Belongs to the GTP cyclohydrolase IV family.

It carries out the reaction GTP + H2O = 7,8-dihydroneopterin 3'-triphosphate + formate + H(+). Its pathway is cofactor biosynthesis; 7,8-dihydroneopterin triphosphate biosynthesis; 7,8-dihydroneopterin triphosphate from GTP: step 1/1. In terms of biological role, converts GTP to 7,8-dihydroneopterin triphosphate. In Pseudomonas putida (strain ATCC 700007 / DSM 6899 / JCM 31910 / BCRC 17059 / LMG 24140 / F1), this protein is GTP cyclohydrolase FolE2.